The sequence spans 314 residues: DNA topoisomerase I (314 aa).

The Topo IB-type catalytic domain occupies Ile77–Gly314. The active-site O-(3'-phospho-DNA)-tyrosine intermediate is the Tyr274.

It belongs to the type IB topoisomerase family.

The protein resides in the virion. It catalyses the reaction ATP-independent breakage of single-stranded DNA, followed by passage and rejoining.. Releases the supercoiling and torsional tension of DNA introduced during the DNA replication and transcription by transiently cleaving and rejoining one strand of the DNA duplex. Introduces a single-strand break via transesterification at the specific target site 5'-[CT]CCTTp site in duplex DNA. The scissile phosphodiester is attacked by the catalytic tyrosine of the enzyme, resulting in the formation of a DNA-(3'-phosphotyrosyl)-enzyme intermediate and the expulsion of a 5'-OH DNA strand. The free DNA strand then undergoes passage around the unbroken strand thus removing DNA supercoils. Finally, in the religation step, the DNA 5'-OH attacks the covalent intermediate to expel the active-site tyrosine and restore the DNA phosphodiester backbone. The sequence is that of DNA topoisomerase I (OPG111) from Cynomys gunnisoni (Gunnison's prairie dog).